We begin with the raw amino-acid sequence, 811 residues long: MNSMSSGHLLSRSLLKLPMSVLVKGTAIPSNPIQDLDIDTHKPVIYALPFRSNVDLLTLQTHAKEAGLPDPLEPLMLNGKAFQRYVFIASRPTLLSSDQHVPSDSIALFSELLTEHKLDSELDVQVIPATVLWGRKPGKEGQERPYLQALNGPEKALAVLASGRDCLVRFSPVVSMRYMADTHGTDASIAHKLARVARIHFSRQKLAASGPNLPQRAQLFARLMNSPAIEKAIADEAKSKQIPLEKARKEAHDILDEIAADFSYSLVKKGDRILGWLWNRIYQGLNINNAATVRRLAQDGHEIVYVPCHRSHMDYLLLSYVLYHEGMVPPHIAAGINLNFFPAGPIFRRGGAFFIRRSFKGAPLYSTIFREYLAELFAKGYSVEYFSEGGRSRTGRLLPAKTGMLAMTIQAMLRGLNRPVTLVPVYIGYEHVMEVGTYAKELRGKRKEKENAGLVLRTLRKLRNFGQGYVNFGEPIPLNQFLNETVPQWTQDIDPMGESKPQWMTPTVNKLANRMMTHINDAAAVNAMTLCATALLASRQRALARDNLIKQVDCYLSLLRNVPYSATSTLPSESAEKLVEHAESLDKFVVETDTMGDIISLDRNQSILMTYYRNNIIHLLALPSLIAQLLIRQQSVSLEKVQATVAQIYPFLKQELFLRFEAEELNDLVLRYVAELARQGLVTVEGKTVTLNQAQTQVLMLLGRIISETLQRYAIALNLLVSCPHLGKAELEEKSQEVAQRLGRLHGINAPEFFDKGVFASLFVTLQEQGYLDDQGRCVLETAKPLSRQLYALIYPEVRMTIQESLCQVDA.

The short motif at 309-314 is the HXXXXD motif element; sequence HRSHMD.

It belongs to the GPAT/DAPAT family.

It is found in the cell inner membrane. It carries out the reaction sn-glycerol 3-phosphate + an acyl-CoA = a 1-acyl-sn-glycero-3-phosphate + CoA. It participates in phospholipid metabolism; CDP-diacylglycerol biosynthesis; CDP-diacylglycerol from sn-glycerol 3-phosphate: step 1/3. This chain is Glycerol-3-phosphate acyltransferase (plsB), found in Vibrio cholerae serotype O1 (strain ATCC 39315 / El Tor Inaba N16961).